A 522-amino-acid chain; its full sequence is Maturase K (522 aa).

Belongs to the intron maturase 2 family. MatK subfamily.

The protein resides in the plastid. It localises to the chloroplast. In terms of biological role, usually encoded in the trnK tRNA gene intron. Probably assists in splicing its own and other chloroplast group II introns. The sequence is that of Maturase K from Pillansia templemannii.